The primary structure comprises 493 residues: Cytochrome P450 710A4 (493 aa).

Residues V5–L25 form a helical membrane-spanning segment. Residue C435 participates in heme binding.

Belongs to the cytochrome P450 family. Heme is required as a cofactor. As to expression, very weak expression in roots and root hairs. Not detected in the root tips.

It localises to the membrane. The catalysed reaction is 5-dehydroepisterol + NADPH + O2 + H(+) = ergosta-5,7,22,24(28)-tetraen-3beta-ol + NADP(+) + 2 H2O. It participates in steroid biosynthesis; sterol biosynthesis. Required to form the C-22 double bond in the sterol side chain. Possesses C-22 desaturase activity toward beta-sitosterol and produces stigmasterol. The sequence is that of Cytochrome P450 710A4 from Arabidopsis thaliana (Mouse-ear cress).